The following is a 344-amino-acid chain: Zinc transporter 9 (344 aa).

A helical transmembrane segment spans residues 1–21; the sequence is MASILISGAAGVSIPLVGTLL. At 22–30 the chain is on the cytoplasmic side; sequence PLNGGLMRG. A helical transmembrane segment spans residues 31–51; the sequence is AKAFAAGVILATGFVHMLSGG. Over 52–72 the chain is Extracellular; that stretch reads SKALSDPCLPEFPWKMFPFPE. The helical transmembrane segment at 73–93 threads the bilayer; it reads FFAMVAALLTLLADFMITGYY. Over 94 to 188 the chain is Cytoplasmic; it reads ERKQEKMMNQ…DVGLDSGVRH (95 aa). The helical transmembrane segment at 189–209 threads the bilayer; the sequence is VVVSQILEMGIVSHSIIIGIS. Over 210-221 the chain is Extracellular; that stretch reads LGVSHSPCTIRP. The chain crosses the membrane as a helical span at residues 222 to 242; the sequence is LLLALSFHQFFEGFALGGCVA. Topologically, residues 243–251 are cytoplasmic; the sequence is EARLTPRGS. Residues 252–272 traverse the membrane as a helical segment; sequence AMMAFFFAITTPIGVAVGTAI. The Extracellular portion of the chain corresponds to 273-291; that stretch reads ASSYNSYSVAALVAEGVLD. Residues 292–312 traverse the membrane as a helical segment; that stretch reads SLSAGILVYMALVDLIAADFL. The Cytoplasmic portion of the chain corresponds to 313–323; the sequence is SKKMSVDFRVQ. A helical transmembrane segment spans residues 324–344; that stretch reads VVSYCFLFLGAGMMSALAIWA.

It belongs to the ZIP transporter (TC 2.A.5) family.

The protein resides in the cell membrane. Zinc transporter involved in zinc uptake in roots. Targeted by BZIP19 transcription factor in response to zinc-deficient conditions. The protein is Zinc transporter 9 (ZIP9) of Arabidopsis thaliana (Mouse-ear cress).